The chain runs to 214 residues: Dephospho-CoA kinase (214 aa).

The region spanning 20-214 (RIGITGGIAS…KLQLKKLYKF (195 aa)) is the DPCK domain. Residue 28–33 (ASGKTI) coordinates ATP.

It belongs to the CoaE family.

It is found in the cytoplasm. The catalysed reaction is 3'-dephospho-CoA + ATP = ADP + CoA + H(+). It participates in cofactor biosynthesis; coenzyme A biosynthesis; CoA from (R)-pantothenate: step 5/5. In terms of biological role, catalyzes the phosphorylation of the 3'-hydroxyl group of dephosphocoenzyme A to form coenzyme A. The polypeptide is Dephospho-CoA kinase (Prochlorococcus marinus (strain NATL2A)).